The sequence spans 382 residues: Lipid-A-disaccharide synthase (382 aa).

The protein belongs to the LpxB family.

The enzyme catalyses 2-N,3-O-bis[(3R)-3-hydroxytetradecanoyl]-alpha-D-glucosaminyl 1-phosphate + UDP-2-N,3-O-bis[(3R)-3-hydroxytetradecanoyl]-alpha-D-glucosamine = lipid A disaccharide (E. coli) + UDP + H(+). The catalysed reaction is a lipid X + a UDP-2-N,3-O-bis[(3R)-3-hydroxyacyl]-alpha-D-glucosamine = a lipid A disaccharide + UDP + H(+). It participates in glycolipid biosynthesis; lipid IV(A) biosynthesis; lipid IV(A) from (3R)-3-hydroxytetradecanoyl-[acyl-carrier-protein] and UDP-N-acetyl-alpha-D-glucosamine: step 5/6. Condensation of UDP-2,3-diacylglucosamine and 2,3-diacylglucosamine-1-phosphate to form lipid A disaccharide, a precursor of lipid A, a phosphorylated glycolipid that anchors the lipopolysaccharide to the outer membrane of the cell. The protein is Lipid-A-disaccharide synthase of Escherichia coli (strain ATCC 8739 / DSM 1576 / NBRC 3972 / NCIMB 8545 / WDCM 00012 / Crooks).